Consider the following 194-residue polypeptide: Imidazoleglycerol-phosphate dehydratase (194 aa).

The protein belongs to the imidazoleglycerol-phosphate dehydratase family.

Its subcellular location is the cytoplasm. The catalysed reaction is D-erythro-1-(imidazol-4-yl)glycerol 3-phosphate = 3-(imidazol-4-yl)-2-oxopropyl phosphate + H2O. The protein operates within amino-acid biosynthesis; L-histidine biosynthesis; L-histidine from 5-phospho-alpha-D-ribose 1-diphosphate: step 6/9. The sequence is that of Imidazoleglycerol-phosphate dehydratase from Bacillus pumilus (strain SAFR-032).